Reading from the N-terminus, the 828-residue chain is Periplasmic nitrate reductase (828 aa).

Residues 1–32 (MNLSRRDFMKANAAMAAATAAGLSIPVKNVEA) constitute a signal peptide (tat-type signal). Residues 37-93 (IKWDKAVCRFCGTGCAVLVGTKDGRVVASQGDPDAEVNRGLNCIKGYFLPKIMYGKD) form the 4Fe-4S Mo/W bis-MGD-type domain. The [4Fe-4S] cluster site is built by Cys-44, Cys-47, Cys-51, and Cys-79. Mo-bis(molybdopterin guanine dinucleotide) contacts are provided by residues Lys-81, Gln-148, Asn-173, Cys-177, 210-217 (WGSNMAEM), 241-245 (STFEH), Met-371, Gln-375, Asn-481, 507-508 (SD), Lys-530, Asp-557, and 717-726 (TGRVLEHWHT). Residue Phe-793 coordinates substrate. Positions 801 and 818 each coordinate Mo-bis(molybdopterin guanine dinucleotide).

This sequence belongs to the prokaryotic molybdopterin-containing oxidoreductase family. NasA/NapA/NarB subfamily. Component of the periplasmic nitrate reductase NapAB complex composed of NapA and NapB. [4Fe-4S] cluster is required as a cofactor. Mo-bis(molybdopterin guanine dinucleotide) serves as cofactor. Predicted to be exported by the Tat system. The position of the signal peptide cleavage has not been experimentally proven.

Its subcellular location is the periplasm. The enzyme catalyses 2 Fe(II)-[cytochrome] + nitrate + 2 H(+) = 2 Fe(III)-[cytochrome] + nitrite + H2O. Functionally, catalytic subunit of the periplasmic nitrate reductase complex NapAB. Receives electrons from NapB and catalyzes the reduction of nitrate to nitrite. This is Periplasmic nitrate reductase from Aggregatibacter actinomycetemcomitans (Actinobacillus actinomycetemcomitans).